The following is a 284-amino-acid chain: Bifunctional protein FolD (284 aa).

Residues 165-167 (GRG), T192, and V233 contribute to the NADP(+) site.

It belongs to the tetrahydrofolate dehydrogenase/cyclohydrolase family. In terms of assembly, homodimer.

The catalysed reaction is (6R)-5,10-methylene-5,6,7,8-tetrahydrofolate + NADP(+) = (6R)-5,10-methenyltetrahydrofolate + NADPH. The enzyme catalyses (6R)-5,10-methenyltetrahydrofolate + H2O = (6R)-10-formyltetrahydrofolate + H(+). The protein operates within one-carbon metabolism; tetrahydrofolate interconversion. Functionally, catalyzes the oxidation of 5,10-methylenetetrahydrofolate to 5,10-methenyltetrahydrofolate and then the hydrolysis of 5,10-methenyltetrahydrofolate to 10-formyltetrahydrofolate. The sequence is that of Bifunctional protein FolD from Corynebacterium efficiens (strain DSM 44549 / YS-314 / AJ 12310 / JCM 11189 / NBRC 100395).